The primary structure comprises 267 residues: Small ribosomal subunit protein uS3 (267 aa).

In terms of domain architecture, KH type-2 spans 43–111; it reads IRKEMSKDLE…QVQLNIFEVK (69 aa). The segment at 216 to 267 is disordered; sequence FEEQQAQQNNRPGRRGGDRRPRRGNRSAAPQAAEAPKAEAPAEAAPAAETKE. Positions 241–267 are enriched in low complexity; sequence RSAAPQAAEAPKAEAPAEAAPAAETKE.

The protein belongs to the universal ribosomal protein uS3 family. As to quaternary structure, part of the 30S ribosomal subunit. Forms a tight complex with proteins S10 and S14.

Functionally, binds the lower part of the 30S subunit head. Binds mRNA in the 70S ribosome, positioning it for translation. This chain is Small ribosomal subunit protein uS3, found in Bifidobacterium longum (strain DJO10A).